Here is a 475-residue protein sequence, read N- to C-terminus: Flavin-dependent monooxygenase (475 aa).

It belongs to the aromatic-ring hydroxylase family. FAD is required as a cofactor.

The protein localises to the cytoplasm. It catalyses the reaction a tetracycline + NADPH + O2 + H(+) = an 11a-hydroxytetracycline + NADP(+) + H2O. The enzyme catalyses tetracycline + NADPH + O2 + H(+) = 11a-hydroxytetracycline + NADP(+) + H2O. Its activity is regulated as follows. Inhibited by anhydrotetracycline. Its function is as follows. An FAD-requiring monooxygenase active on some tetracycline antibiotic derivatives, which leads to their inactivation. Hydroxylates carbon 11a of tetracycline and some analogs. Confers resistance to tetracycline and doxycycline via an oxidoreductase activity; probably monooxygenates the antibiotics. Does not act on tigecycline. The protein is Flavin-dependent monooxygenase of Mycobacteroides abscessus (strain ATCC 19977 / DSM 44196 / CCUG 20993 / CIP 104536 / JCM 13569 / NCTC 13031 / TMC 1543 / L948) (Mycobacterium abscessus).